We begin with the raw amino-acid sequence, 217 residues long: Replication-associated protein A (217 aa).

Residues 1–17 are compositionally biased toward low complexity; the sequence is MRAPASSAASNRPGPSN. The interval 1–22 is disordered; it reads MRAPASSAASNRPGPSNHPTPR. The 104-residue stretch at 22 to 125 folds into the CRESS-DNA virus Rep endonuclease domain; that stretch reads RWNSKQFFLT…NGDSDEMGEL (104 aa). Positions 29 to 32 match the RCR-1 motif; the sequence is FLTY. A divalent metal cation-binding residues include Glu63, His71, and His73. Residues 71 to 73 carry the RCR-2 motif; that stretch reads HLH. Tyr111 serves as the catalytic For DNA cleavage activity. The RCR-3 signature appears at 111–114; it reads YISK. The interval 176 to 188 is oligomerization; the sequence is SAAALFTEPPPVY.

It belongs to the geminiviridae Rep protein family. As to quaternary structure, homooligomer. Part of the C- and V-complexes which are RepA-Rep-DNA complexes involved in the c-sense and v-sense transcription.

The protein resides in the host nucleus. Its subcellular location is the host cytoplasm. Functionally, implicated in enhancement of V-sense gene expression. Acts a an inhibitor of C-sense gene transcription. This chain is Replication-associated protein A, found in Miscanthus sacchariflorus (MiSV).